The sequence spans 178 residues: Enhancer of split m5 protein (178 aa).

The bHLH domain maps to 18 to 73 (YLKVKKPLLERQRRARMNKCLDTLKTLVAEFQGDDAILRMDKAEMLEAALVFMRKQ). Positions 89–122 (FKNGYMNAVSEISRVMACTPAMSVDVGKTVMTHL) constitute an Orange domain. Residues 135–165 (VQTSVTTSTPRPLSPASSGYHSDNEDSQSAA) are compositionally biased toward polar residues. A disordered region spans residues 135-178 (VQTSVTTSTPRPLSPASSGYHSDNEDSQSAASPKPVEETMWRPW). Residues 169–178 (PVEETMWRPW) show a composition bias toward basic and acidic residues. The WRPW motif signature appears at 175–178 (WRPW).

Transcription repression requires formation of a complex with a corepressor protein (Groucho). Forms homodimers.

The protein resides in the nucleus. Participates in the control of cell fate choice by uncommitted neuroectodermal cells in the embryo. Transcriptional repressor. Binds DNA on N-box motifs: 5'-CACNAG-3'. This chain is Enhancer of split m5 protein, found in Drosophila melanogaster (Fruit fly).